The sequence spans 417 residues: Transcobalamin-1 (417 aa).

Residues Met1–Ser25 form the signal peptide. The interval Gln24–Lys308 is globular N-terminal alpha domain. Asn90 carries N-linked (GlcNAc...) asparagine glycosylation. Residue Thr143–Gln147 participates in cyanocob(III)alamin binding. Cys156 and Cys198 are joined by a disulfide. N-linked (GlcNAc...) asparagine glycosylation is found at Asn161, Asn166, and Asn179. Asp187 and Gln287 together coordinate cyanocob(III)alamin. Positions Val309–Glu327 are flexible linker. N-linked (GlcNAc...) asparagine glycosylation is found at Asn312, Asn328, Asn345, and Asn360. A globular C-terminal beta domain region spans residues Asn328 to Ile417. Cyanocob(III)alamin contacts are provided by residues Tyr376–Ile377 and Trp393–His395.

This sequence belongs to the eukaryotic cobalamin transport proteins family. Contains about 30% carbohydrates. Haptocorrins are a family of cobalamin-binding glycoproteins found in blood, salivary and mucosal secretions.

The protein localises to the secreted. Functionally, binds vitamin B12 with femtomolar affinity and protects it from the acidic environment of the stomach. Binds to cobalamin and to cobalamin analogs such as cobinamide. The chain is Transcobalamin-1 (TCN1) from Sus scrofa (Pig).